Consider the following 156-residue polypeptide: Succinate dehydrogenase assembly factor 2-B, mitochondrial (156 aa).

The N-terminal 24 residues, 1–24, are a transit peptide targeting the mitochondrion; the sequence is MLRQLIVSTVGRRMPLQMISQSRL.

Belongs to the SDHAF2 family. As to quaternary structure, interacts with the flavoprotein subunit within the SDH catalytic dimer.

It is found in the mitochondrion matrix. In terms of biological role, plays an essential role in the assembly of succinate dehydrogenase (SDH), an enzyme complex (also referred to as respiratory complex II) that is a component of both the tricarboxylic acid (TCA) cycle and the mitochondrial electron transport chain, and which couples the oxidation of succinate to fumarate with the reduction of ubiquinone (coenzyme Q) to ubiquinol. Required for flavinylation (covalent attachment of FAD) of the flavoprotein subunit of the SDH catalytic dimer. This Drosophila erecta (Fruit fly) protein is Succinate dehydrogenase assembly factor 2-B, mitochondrial.